We begin with the raw amino-acid sequence, 755 residues long: Polyribonucleotide nucleotidyltransferase (755 aa).

Mg(2+) contacts are provided by Asp493 and Asp499. Residues 560 to 619 (PRIMTIQIPVDKIGALIGPGGKTIRNICDTTGAQIDIEDDGRVFITAPDGEAAKKAISMI) enclose the KH domain. The 70-residue stretch at 629–698 (GDIFLGKVVS…NTGKISLSRR (70 aa)) folds into the S1 motif domain. Positions 704-755 (ETPEARKAAGAAPRPRPREEQRGGREEPRSLREELRGPRRDGERPRPRRRDD) are disordered. Residues 719 to 755 (RPREEQRGGREEPRSLREELRGPRRDGERPRPRRRDD) are compositionally biased toward basic and acidic residues.

Belongs to the polyribonucleotide nucleotidyltransferase family. The cofactor is Mg(2+).

It is found in the cytoplasm. It carries out the reaction RNA(n+1) + phosphate = RNA(n) + a ribonucleoside 5'-diphosphate. Functionally, involved in mRNA degradation. Catalyzes the phosphorolysis of single-stranded polyribonucleotides processively in the 3'- to 5'-direction. This is Polyribonucleotide nucleotidyltransferase from Chloroflexus aggregans (strain MD-66 / DSM 9485).